We begin with the raw amino-acid sequence, 171 residues long: Zinc uptake regulation protein (171 aa).

This sequence belongs to the Fur family.

In terms of biological role, acts as a negative controlling element, employing Zn(2+) as a cofactor to bind the operator of the repressed genes (znuACB). The polypeptide is Zinc uptake regulation protein (zur) (Escherichia coli (strain K12)).